Reading from the N-terminus, the 1035-residue chain is NACHT, LRR and PYD domains-containing protein 3 (1035 aa).

In terms of domain architecture, Pyrin spans 1-93; the sequence is MKMMSVRCKL…WEKAKKDQPE (93 aa). Phosphoserine is present on serine 5. The cysteines at positions 8 and 106 are disulfide-linked. Tyrosine 13 carries the post-translational modification Phosphotyrosine. The S-palmitoyl cysteine moiety is linked to residue cysteine 128. Positions 129-132 are required for binding to phosphatidylinositol 4-phosphate (PtdIns4P); sequence KKKK. A phosphotyrosine mark is found at tyrosine 134 and tyrosine 138. The 71-residue stretch at 138 to 208 folds into the FISNA domain; the sequence is YRRHVRSRFY…SSLKLELLFE (71 aa). Serine 159 carries the phosphoserine modification. The residue at position 166 (tyrosine 166) is a Phosphotyrosine. Position 167 (threonine 167) interacts with ATP. Phosphoserine is present on serine 199. The 317-residue stretch at 218–534 folds into the NACHT domain; it reads HTVVFQGAAG…EFFAAMYYLL (317 aa). 224 to 231 provides a ligand contact to ATP; sequence GAAGIGKT. A phosphoserine mark is found at serine 263 and serine 293. Lysine 322 participates in a covalent cross-link: Glycyl lysine isopeptide (Lys-Gly) (interchain with G-Cter in ubiquitin). A Phosphoserine modification is found at serine 332. The KFERQ-like motif 1 motif lies at 353–357; it reads LEKLQ. Lysine 428 is covalently cross-linked (Glycyl lysine isopeptide (Lys-Gly) (interchain with G-Cter in ubiquitin)). Histidine 520 is a binding site for ATP. Residues 603–607 carry the KFERQ-like motif 2 motif; it reads QVRLE. A Glycyl lysine isopeptide (Lys-Gly) (interchain with G-Cter in ubiquitin) cross-link involves residue lysine 689. Phosphoserine occurs at positions 727 and 734. 5 LRR repeats span residues 741 to 761, 770 to 791, 798 to 818, 827 to 848, and 855 to 875; these read SLTE…RVLC, NIQR…NISS, KLVE…RLLC, NLQK…DLAL, and SLTR…QVLC. The short motif at 797–801 is the KFERQ-like motif 3 element; that stretch reads QKLVE. Serine 805 is subject to Phosphoserine. S-palmitoyl cysteine attachment occurs at residues cysteine 836, cysteine 837, and cysteine 843. The residue at position 860 (tyrosine 860) is a Phosphotyrosine. Residue lysine 877 forms a Glycyl lysine isopeptide (Lys-Gly) (interchain with G-Cter in ubiquitin) linkage. LRR repeat units lie at residues 884–905, 912–932, 941–962, and 969–990; these read NLQK…ALTS, NLTH…KLLC, KLQM…DLST, and SLRK…TLCE. The S-palmitoyl cysteine moiety is linked to residue cysteine 957. Lysine 972 participates in a covalent cross-link: Glycyl lysine isopeptide (Lys-Gly) (interchain with G-Cter in ubiquitin). The short motif at 990–994 is the KFERQ-like motif 4 element; the sequence is EVLKQ. At serine 1034 the chain carries Phosphoserine.

It belongs to the NLRP family. As to quaternary structure, sensor component of NLRP3 inflammasomes; inflammasomes are supramolecular complexes that assemble in the cytosol in response to pathogens and other damage-associated signals and play critical roles in innate immunity and inflammation. The core of NLRP3 inflammasomes consists of a signal sensor component (NLRP3), an adapter (PYCARD/ASC), which recruits an effector pro-inflammatory caspase (CASP1 and, possibly, CASP4 and CASP5). Homodecamer; inactive NLRP3 forms homodecameric double-ring cages that hide pyrin domains within NACHT-LRR rings to avoid premature activation. Interacts (via pyrin domain) with PYCARD/ASC (via pyrin domain); interaction is direct. Interacts (via LRR repeat domain) with NEK7 (via N-terminus); the interaction is required for the formation of the complex NLRP3:PYCARD, oligomerization of PYCARD/ASC and activation of CASP1. Interacts (via LRR repeat domain) with NR4A1/Nur77 (via N-terminus); the interaction is direct, requires activation of NR4A1 by its ligands NBRE-containing dsDNA and lipopolysaccharide, and stimulates the association of NLRP3 with NEK7 for non-canonical NLRP3 inflammasome activation. Interacts with CARD8; leading to inhibit formation of the NLRP3 inflammasome. Interacts with MEFV; this interaction targets NLRP3 to degradation by autophagy, hence preventing excessive IL1B- and IL18-mediated inflammation. Interacts with EIF2AK2/PKR; this interaction requires EIF2AK2 activity, is accompanied by EIF2AK2 autophosphorylation and promotes inflammasome assembly in response to specific stimuli. Interacts with GBP5 (via DAPIN domain); this interaction promotes inflammasome assembly in response to microbial and soluble, but not crystalline, agents. Interacts with PML (isoform PML-1) (via the leucine-rich repeat (LRR) domain); PML-mediated increase in NLRP3 inflammasome activation does not depend upon this interaction. Interacts (via NACHT domain) with DHX33 (via DEAH box); NLRP3 activation in presence of cytosolic dsRNA is mediated by DHX33. Interacts (via NACHT and LRR domains) with ARRB2; this interaction is direct and inducible by polyunsaturated fatty acids (PUFAs). Interacts (via NACHT domain) with DDX3X under both LPS-primed and inflammasome-activating conditions. Interacts with IRF4 (via the LRR domain); this interaction is direct and is required for optimal IRF4 binding to IL4 promoter and efficient IL4 transactivation during differentiation of Th2 helper T-cells. Interacts with MAVS; promoting localization to mitochondria and activation of the NLRP3 inflammasome. Interacts with MARK4; promoting localization of NLRP3 to the microtubule organizing center (MTOC). Interacts with TRIM50; this interaction also promotes NLRP3 oligomerization and subsequent inflammasome activation. Interacts with IRGM; preventing NLRP3 inflammasome assembly and promoting NLRP3 degradation. Interacts (via NACHT and LLR domains) with ABHD8; this interaction is enhanced in the presence of NLRP3 inflammasome inducers, such as ATP, nigericin, silica, or alum. Interaction with ABHD8 leads the recruitment of ZDHHC12, hence facilitating NLRP3 palmitoylation and degradation by the chaperone-mediated autophagy pathway (CMA), therefore attenuating NLRP3 inflammasome activation. Phosphorylation by MAPK8/JNK1 increases inflammasome activation by promoting deubiquitination by BRCC3 and NLRP3 homooligomerization. Phosphorylation at Ser-805 by CSNK1A1 prevents inflammasome activation by preventing NEK7 recruitment. Phosphorylation at Ser-5 in the pyrin domain inhibits homomultimerization of NLRP3 and activation of the NLRP3 inflammasome: dephosphorylation by protein phosphatase 2A (PP2A) promotes assembly of the NLRP3 inflammasome. Phosphorylation at Ser-293 by PKD/PRKD1 promotes NLRP3 inflammasome assembly. Phosphorylation by ERK1/MAPK3 promotes NLRP3 inflammasome assembly. Phosphorylation by BTK (at Tyr-134, Tyr-138 and Tyr-166) in the region that mediates binding to phosphatidylinositol phosphate, promotes relocalization of NLRP3 and assembly of the NLRP3 inflammasome. Phosphorylation at Tyr-860 inhibits NLRP3 inflammasome assembly: dephosphorylation by PTPN22 promotes inflammasome activation. Phosphorylated by LATS1 and LATS2 at Ser-263 following palmitoylation by ZDHHC1, promoting its relocalization to the microtubule organizing center (MTOC), where NLRP3 is activated by NEK7, leading to inflammasome assembly and activation. Post-translationally, ubiquitinated; undergoes both 'Lys-48'- and 'Lys-63'-linked polyubiquitination. Ubiquitination does not lead to degradation, but inhibits inflammasome activation. Deubiquitination is catalyzed by BRCC3 and associated with NLRP3 activation and inflammasome assembly. This process can be induced by the activation of Toll-like receptors (by LPS), through a non-transcriptional pathway dependent on the mitochondrial production of reactive oxygen species, and by ATP. Ubiquitinated by TRIM31 via 'Lys-48'-linked ubiquitination, leading to its degradation by the proteasome. Ubiquitinated at Lys-689 by the SCF(FBXL2) complex, leading to its degradation by the proteasome. Ubiquitinated by TRIM35 via 'lys-48' and 'Lys-63'-linked ubiquitination leading to inhibition of NLRP3 inflammasome activation. Undergoes 'Lys-27'-linked polyubiquitination by MARCHF5, leading to NLRP3-NEK7 complex formation and NLRP3 oligomerization. In terms of processing, the disulfide bond in the pyrin domain might play a role in reactive oxygen species-mediated activation. Palmitoylation by ZDHHC12 promotes NLRP3 degradation by the chaperone-mediated autophagy pathway (CMA) and therefore limits NLRP3 inflammasome activation. Interaction with ZDHHC12, and hence NLRP3 palmitoylation, is greatly enhanced by ABHD8. Following palmitoylation, HSPA8/HSC70 recognizes and binds the KFERQ-like motifs on NLRP3 and promotes NLRP3 recruitment to lysosomes, where it is degraded via the chaperone-mediated autophagy pathway in a LAMP2-dependent process. Palmitoylation at Cys-836 and Cys-837 by ZDHHC5 enhances its binding to NEK7 leading to inflammasome assembly and activation. Palmitoylation at Cys-128 and Cys-957 by ZDHHC1 facilitates phosphorylation at Ser-263 by LATS1 and LATS2, promoting its relocalization to the microtubule organizing center (MTOC), where NLRP3 is activated by NEK7, leading to inflammasome assembly and activation. Depalmitoylated by ABHD17A. Post-translationally, degraded via selective autophagy following interaction with IRGM. IRGM promotes NLRP3 recruitment to autophagosome membranes, promoting its SQSTM1/p62-dependent autophagy-dependent degradation.

The protein resides in the cytoplasm. The protein localises to the cytosol. Its subcellular location is the inflammasome. It is found in the cytoskeleton. It localises to the microtubule organizing center. The protein resides in the golgi apparatus membrane. The protein localises to the endoplasmic reticulum. Its subcellular location is the mitochondrion. It is found in the secreted. It localises to the nucleus. The catalysed reaction is ATP + H2O = ADP + phosphate + H(+). Under resting conditions, NLRP3 binds ADP and is autoinhibited. Inactive NLRP3 forms homodecameric double-ring cages that hide pyrin domains within NACHT-LRR rings to avoid premature activation. NLRP3 activation stimuli include extracellular ATP, nigericin, reactive oxygen species, crystals of monosodium urate or cholesterol, amyloid-beta fibers, environmental or industrial particles and nanoparticles, such as asbestos, silica, aluminum salts, cytosolic dsRNA, etc. Almost all stimuli trigger intracellular K(+) efflux. These stimuli lead to membrane perturbations that induce activation of NLRP3. Upon activation, NLRP3 is transported to microtubule organizing center (MTOC), where it is unlocked by NEK7, leading to its relocalization to dispersed trans-Golgi network (dTGN) vesicle membranes and recruitment of PYCARD/ASC for the formation of an active inflammasome complex. NEK7-activated NLRP3 forms a disk-shaped inflammasome. NLRP3 and PYCARD/ASC interact via their respective pyrin domains; interaction initiates speck formation (nucleation) which greatly enhances further addition of soluble PYCARD/ASC molecules to the speck in a prion-like polymerization process. Clustered PYCARD/ASC nucleates the formation of CASP1 filaments through the interaction of their respective CARD domains, acting as a platform for CASP1 polymerization and activation. Active CASP1 then processes IL1B and IL18 precursors, leading to the release of mature cytokines in the extracellular milieu and inflammatory response. NLRP3 inflammasome assembly is inhibited by IRGM, which impedes NLRP3 oligomerization. NLRP3 inflammasome is inhibited by cyclic AMP (cAMP), which directly binds NLRP3; inhibition is relieved by calcium-sensing receptor CASR, which inhibits production of cAMP. Specifically inhibited by sulfonylurea MCC950 (also named CP-456,773, CRID3), a potent and specific small-molecule inhibitor of the NLRP3 inflammasome that acts by preventing ATP hydrolysis. Its function is as follows. Sensor component of the NLRP3 inflammasome, which mediates inflammasome activation in response to defects in membrane integrity, leading to secretion of inflammatory cytokines IL1B and IL18 and pyroptosis. In response to pathogens and other damage-associated signals that affect the integrity of membranes, initiates the formation of the inflammasome polymeric complex composed of NLRP3, CASP1 and PYCARD/ASC. Recruitment of pro-caspase-1 (proCASP1) to the NLRP3 inflammasome promotes caspase-1 (CASP1) activation, which subsequently cleaves and activates inflammatory cytokines IL1B and IL18 and gasdermin-D (GSDMD), promoting cytokine secretion and pyroptosis. Activation of NLRP3 inflammasome is also required for HMGB1 secretion; stimulating inflammatory responses. Under resting conditions, ADP-bound NLRP3 is autoinhibited. NLRP3 activation stimuli include extracellular ATP, nigericin, reactive oxygen species, crystals of monosodium urate or cholesterol, amyloid-beta fibers, environmental or industrial particles and nanoparticles, such as asbestos, silica, aluminum salts, cytosolic dsRNA, etc. Almost all stimuli trigger intracellular K(+) efflux. These stimuli lead to membrane perturbation and activation of NLRP3. Upon activation, NLRP3 is transported to microtubule organizing center (MTOC), where it is unlocked by NEK7, leading to its relocalization to dispersed trans-Golgi network (dTGN) vesicle membranes and formation of an active inflammasome complex. Associates with dTGN vesicle membranes by binding to phosphatidylinositol 4-phosphate (PtdIns4P). Shows ATPase activity. Functionally, independently of inflammasome activation, regulates the differentiation of T helper 2 (Th2) cells and has a role in Th2 cell-dependent asthma and tumor growth. During Th2 differentiation, required for optimal IRF4 binding to IL4 promoter and for IRF4-dependent IL4 transcription. Binds to the consensus DNA sequence 5'-GRRGGNRGAG-3'. May also participate in the transcription of IL5, IL13, GATA3, CCR3, CCR4 and MAF. The protein is NACHT, LRR and PYD domains-containing protein 3 of Rattus norvegicus (Rat).